The chain runs to 824 residues: Type IV secretion system protein PtlC homolog (824 aa).

456-463 contributes to the ATP binding site; the sequence is GQSGSGKT.

Belongs to the TrbE/VirB4 family.

Its subcellular location is the cell membrane. This chain is Type IV secretion system protein PtlC homolog (ptlC), found in Bordetella bronchiseptica (strain ATCC BAA-588 / NCTC 13252 / RB50) (Alcaligenes bronchisepticus).